Reading from the N-terminus, the 132-residue chain is Ribosome-binding factor A (132 aa).

This sequence belongs to the RbfA family. Monomer. Binds 30S ribosomal subunits, but not 50S ribosomal subunits or 70S ribosomes.

It is found in the cytoplasm. Functionally, one of several proteins that assist in the late maturation steps of the functional core of the 30S ribosomal subunit. Associates with free 30S ribosomal subunits (but not with 30S subunits that are part of 70S ribosomes or polysomes). Required for efficient processing of 16S rRNA. May interact with the 5'-terminal helix region of 16S rRNA. This Bordetella avium (strain 197N) protein is Ribosome-binding factor A.